Here is a 1105-residue protein sequence, read N- to C-terminus: KAT8 regulatory NSL complex subunit 1 (1105 aa).

Lys-104 carries the N6-acetyllysine modification. Disordered stretches follow at residues 145–211 (GQTA…CTLP) and 225–263 (NNSTANKSSVNSMEQPALQGSSRLSPGTDSSSNLGGVKL). The segment covering 225 to 258 (NNSTANKSSVNSMEQPALQGSSRLSPGTDSSSNL) has biased composition (polar residues). A Phosphoserine modification is found at Ser-249. Lys-262 is covalently cross-linked (Glycyl lysine isopeptide (Lys-Gly) (interchain with G-Cter in SUMO2)). Ser-268 is subject to Phosphoserine. The stretch at 283–314 (RITALLRRQADIESRARRLQKRLQVVQAKQVE) forms a coiled coil. Lys-331 participates in a covalent cross-link: Glycyl lysine isopeptide (Lys-Gly) (interchain with G-Cter in SUMO2). 2 disordered regions span residues 399-426 (DSDVTDSSSGGESDIEEEELTRADPEQR) and 733-857 (TAKL…RRGE). 2 stretches are compositionally biased toward basic and acidic residues: residues 741-753 (TRPDRTHRQHLDD) and 780-804 (DPNHSKMRLRDHSSERSEVLKHHTD). Residues 827-850 (STSSDSPAPASSSSQVTASTSQQP) are compositionally biased toward low complexity. The interval 850-882 (PVRRRRGESSFDINNIVIPMSVAATTRVEKLQY) is required for activation of KAT8 histone acetyltransferase activity. Positions 884–1035 (EILTPSWREV…GLDEQSVQPW (152 aa)) constitute a PEHE domain. The segment at 910 to 928 (EDLSDAAFAALHAKCEEME) is interaction with KAT8 HAT domain. Residues 938–1034 (VPPQRRGSRS…LGLDEQSVQP (97 aa)) form a disordered region. A compositionally biased stretch (polar residues) spans 955–965 (TTPQLGSANPS). The span at 975 to 988 (SSSHSLSEYSHGQS) shows a compositional bias: low complexity. Phosphoserine is present on residues Ser-991 and Ser-994. The residue at position 1003 (Thr-1003) is a Phosphothreonine. Positions 1008-1019 (DTPRHLASEDTR) are enriched in basic and acidic residues. Phosphoserine is present on Ser-1045. The disordered stretch occupies residues 1058–1105 (ERAARCTRRTSGSKTGRETEAAPTSPPIVPLKSRHLVAAATAQRPTHR).

Component of the NSL complex at least composed of MOF/KAT8, KANSL1, KANSL2, KANSL3, MCRS1, PHF20, OGT1/OGT, WDR5 and HCFC1. Interacts (via PEHE domain) with KAT8 (via HAT domain); the interaction is direct. Component of some MLL1/MLL complex, at least composed of the core components KMT2A/MLL1, ASH2L, HCFC1, WDR5 and RBBP5, as well as the facultative components BACC1, CHD8, E2F6, HSP70, INO80C, KANSL1, LAS1L, MAX, MCRS1, MGA, KAT8/MOF, PELP1, PHF20, PRP31, RING2, RUVB1/TIP49A, RUVB2/TIP49B, SENP3, TAF1, TAF4, TAF6, TAF7, TAF9 and TEX10. As to expression, expressed in the brain.

The protein resides in the nucleus. It localises to the chromosome. The protein localises to the centromere. Its subcellular location is the kinetochore. It is found in the mitochondrion. The protein resides in the cytoplasm. It localises to the cytoskeleton. The protein localises to the spindle pole. In terms of biological role, non-catalytic component of the NSL histone acetyltransferase complex, a multiprotein complex that mediates histone H4 acetylation at 'Lys-5'- and 'Lys-8' (H4K5ac and H4K8ac) at transcription start sites and promotes transcription initiation. The NSL complex also acts as a regulator of gene expression in mitochondria. In addition to its role in transcription, KANSL1 also plays an essential role in spindle assembly during mitosis. Associates with microtubule ends and contributes to microtubule stability. In Homo sapiens (Human), this protein is KAT8 regulatory NSL complex subunit 1 (KANSL1).